The sequence spans 415 residues: L-threonine dehydratase biosynthetic IlvA (415 aa).

The residue at position 53 (Lys53) is an N6-(pyridoxal phosphate)lysine. Pyridoxal 5'-phosphate contacts are provided by residues Asn80, Gly183–Leu187, and Ser308. Residues His332–Lys406 form the ACT-like domain.

The protein belongs to the serine/threonine dehydratase family. As to quaternary structure, homotetramer. It depends on pyridoxal 5'-phosphate as a cofactor.

It catalyses the reaction L-threonine = 2-oxobutanoate + NH4(+). The protein operates within amino-acid biosynthesis; L-isoleucine biosynthesis; 2-oxobutanoate from L-threonine: step 1/1. Catalyzes the anaerobic formation of alpha-ketobutyrate and ammonia from threonine in a two-step reaction. The first step involved a dehydration of threonine and a production of enamine intermediates (aminocrotonate), which tautomerizes to its imine form (iminobutyrate). Both intermediates are unstable and short-lived. The second step is the nonenzymatic hydrolysis of the enamine/imine intermediates to form 2-ketobutyrate and free ammonia. In the low water environment of the cell, the second step is accelerated by RidA. The protein is L-threonine dehydratase biosynthetic IlvA (ilvA) of Halalkalibacterium halodurans (strain ATCC BAA-125 / DSM 18197 / FERM 7344 / JCM 9153 / C-125) (Bacillus halodurans).